The chain runs to 67 residues: Metallothionein-A (67 aa).

It belongs to the metallothionein superfamily. Type 4 family.

Functionally, metallothioneins have a high content of cysteine residues that bind various heavy metals. The protein is Metallothionein-A of Sphaerechinus granularis (Purple sea urchin).